A 504-amino-acid polypeptide reads, in one-letter code: MFSKKSYDGPPAGYGPPTGYGAPTADYGYGSPPPGSYYVDDAPQLFYKWTSPPGAVRGLQAGVLVLCIAIFACVASTLAWDYGYGLGGAYGTGLGGFYGSNYYGSGLSYSYGYGGYYGGVNQRTANGFMIAMAVLCFLAQLGLLVAALSKSGATRSRRFYLAVLVLSAVLAFVMLIASIVYIMGVNPQAQMSSGYYYSPLLAMCSQAYGSTYLNQYIYHYCTVDPQEAVAAVCGFLIVILLCLICFFAQKTRSKIWRYGKANIYWDRAPVVQEGPDVEEWVKNVADGASVQDETATLAYSEKPTSPVAAPPYSYVPPPSAGYYPSGTYSSRGDQPDRALSASPVHGEEEEEKGKDQPSRPPARRGRRRRRNPELDESQYETDYTTAVESSDERDQEQWASLYPPITSDGARQRYKQEFDTDLKRYKQLCAEMDSINDRLNQLSRRLDSITEDSPQYQDVAEEYNQLKDLKRSPDYQSKKQESKVLRNKLFHIKRMVSAYDKVRG.

Residues 1–57 (MFSKKSYDGPPAGYGPPTGYGAPTADYGYGSPPPGSYYVDDAPQLFYKWTSPPGAVR) lie on the Cytoplasmic side of the membrane. Residues 51–253 (SPPGAVRGLQ…ICFFAQKTRS (203 aa)) enclose the MARVEL domain. The chain crosses the membrane as a helical span at residues 58–80 (GLQAGVLVLCIAIFACVASTLAW). Topologically, residues 81–123 (DYGYGLGGAYGTGLGGFYGSNYYGSGLSYSYGYGGYYGGVNQR) are extracellular. The chain crosses the membrane as a helical span at residues 124–148 (TANGFMIAMAVLCFLAQLGLLVAAL). Over 149 to 158 (SKSGATRSRR) the chain is Cytoplasmic. The helical transmembrane segment at 159 to 183 (FYLAVLVLSAVLAFVMLIASIVYIM) threads the bilayer. Over 184 to 227 (GVNPQAQMSSGYYYSPLLAMCSQAYGSTYLNQYIYHYCTVDPQE) the chain is Extracellular. Residues C204 and C221 are joined by a disulfide bond. Residues 228 to 249 (AVAAVCGFLIVILLCLICFFAQ) traverse the membrane as a helical segment. Over 250–504 (KTRSKIWRYG…MVSAYDKVRG (255 aa)) the chain is Cytoplasmic. Positions 324–396 (PSGTYSSRGD…VESSDERDQE (73 aa)) are disordered. Over residues 361-370 (PARRGRRRRR) the composition is skewed to basic residues. Y379 and Y383 each carry phosphotyrosine. An interaction with TJP1 region spans residues 379–385 (YETDYTT). In terms of domain architecture, OCEL spans 396-504 (EQWASLYPPI…MVSAYDKVRG (109 aa)). Positions 412-471 (QRYKQEFDTDLKRYKQLCAEMDSINDRLNQLSRRLDSITEDSPQYQDVAEEYNQLKDLKR) form a coiled coil.

The protein belongs to the ELL/occludin family. Interacts with TJP1 and TJP3. Phosphorylated. As to expression, localized at tight junctions of both epithelial and endothelial cells. Highly expressed in lung and liver. Expressed at a lower level in brain.

It localises to the cell membrane. Its subcellular location is the cell junction. The protein localises to the tight junction. In terms of biological role, may play a role in the formation and regulation of the tight junction (TJ) paracellular permeability barrier. Interacts with ZO-1. This Gallus gallus (Chicken) protein is Occludin (OCLN).